A 508-amino-acid chain; its full sequence is Bifunctional purine biosynthesis protein PurH (508 aa).

Residues 1-144 (MTRALLSVSD…KNFAGVLPIV (144 aa)) enclose the MGS-like domain.

The protein belongs to the PurH family.

It carries out the reaction (6R)-10-formyltetrahydrofolate + 5-amino-1-(5-phospho-beta-D-ribosyl)imidazole-4-carboxamide = 5-formamido-1-(5-phospho-D-ribosyl)imidazole-4-carboxamide + (6S)-5,6,7,8-tetrahydrofolate. It catalyses the reaction IMP + H2O = 5-formamido-1-(5-phospho-D-ribosyl)imidazole-4-carboxamide. It participates in purine metabolism; IMP biosynthesis via de novo pathway; 5-formamido-1-(5-phospho-D-ribosyl)imidazole-4-carboxamide from 5-amino-1-(5-phospho-D-ribosyl)imidazole-4-carboxamide (10-formyl THF route): step 1/1. Its pathway is purine metabolism; IMP biosynthesis via de novo pathway; IMP from 5-formamido-1-(5-phospho-D-ribosyl)imidazole-4-carboxamide: step 1/1. This is Bifunctional purine biosynthesis protein PurH from Leuconostoc citreum (strain KM20).